The following is a 525-amino-acid chain: Light-independent protochlorophyllide reductase subunit B (525 aa).

Residue D36 participates in [4Fe-4S] cluster binding. The Proton donor role is filled by D292. 428 to 429 (GL) is a binding site for substrate. The segment at 447 to 470 (PSASSENGSAPLSAGTATPAAAPE) is disordered. Positions 460 to 470 (AGTATPAAAPE) are enriched in low complexity.

This sequence belongs to the ChlB/BchB/BchZ family. In terms of assembly, protochlorophyllide reductase is composed of three subunits; BchL, BchN and BchB. Forms a heterotetramer of two BchB and two BchN subunits. It depends on [4Fe-4S] cluster as a cofactor.

The catalysed reaction is chlorophyllide a + oxidized 2[4Fe-4S]-[ferredoxin] + 2 ADP + 2 phosphate = protochlorophyllide a + reduced 2[4Fe-4S]-[ferredoxin] + 2 ATP + 2 H2O. It participates in porphyrin-containing compound metabolism; bacteriochlorophyll biosynthesis (light-independent). Functionally, component of the dark-operative protochlorophyllide reductase (DPOR) that uses Mg-ATP and reduced ferredoxin to reduce ring D of protochlorophyllide (Pchlide) to form chlorophyllide a (Chlide). This reaction is light-independent. The NB-protein (BchN-BchB) is the catalytic component of the complex. The chain is Light-independent protochlorophyllide reductase subunit B from Chlorobium luteolum (strain DSM 273 / BCRC 81028 / 2530) (Pelodictyon luteolum).